We begin with the raw amino-acid sequence, 278 residues long: Dermonecrotic toxin LspiSicTox-betaIE2i (278 aa).

His5 is an active-site residue. Mg(2+) is bound by residues Glu25 and Asp27. His41 serves as the catalytic Nucleophile. Intrachain disulfides connect Cys45/Cys51 and Cys47/Cys190. Glu85 is a binding site for Mg(2+).

This sequence belongs to the arthropod phospholipase D family. Class II subfamily. It depends on Mg(2+) as a cofactor. Expressed by the venom gland.

The protein resides in the secreted. It catalyses the reaction an N-(acyl)-sphingosylphosphocholine = an N-(acyl)-sphingosyl-1,3-cyclic phosphate + choline. The catalysed reaction is an N-(acyl)-sphingosylphosphoethanolamine = an N-(acyl)-sphingosyl-1,3-cyclic phosphate + ethanolamine. The enzyme catalyses a 1-acyl-sn-glycero-3-phosphocholine = a 1-acyl-sn-glycero-2,3-cyclic phosphate + choline. It carries out the reaction a 1-acyl-sn-glycero-3-phosphoethanolamine = a 1-acyl-sn-glycero-2,3-cyclic phosphate + ethanolamine. Dermonecrotic toxins cleave the phosphodiester linkage between the phosphate and headgroup of certain phospholipids (sphingolipid and lysolipid substrates), forming an alcohol (often choline) and a cyclic phosphate. This toxin acts on sphingomyelin (SM). It may also act on ceramide phosphoethanolamine (CPE), lysophosphatidylcholine (LPC) and lysophosphatidylethanolamine (LPE), but not on lysophosphatidylserine (LPS), and lysophosphatidylglycerol (LPG). It acts by transphosphatidylation, releasing exclusively cyclic phosphate products as second products. Induces dermonecrosis, hemolysis, increased vascular permeability, edema, inflammatory response, and platelet aggregation. The chain is Dermonecrotic toxin LspiSicTox-betaIE2i from Loxosceles spinulosa (Recluse spider).